Here is a 122-residue protein sequence, read N- to C-terminus: Large ribosomal subunit protein uL14c (122 aa).

Belongs to the universal ribosomal protein uL14 family. In terms of assembly, part of the 50S ribosomal subunit.

The protein localises to the plastid. Its subcellular location is the chloroplast. Its function is as follows. Binds to 23S rRNA. This chain is Large ribosomal subunit protein uL14c, found in Angiopteris evecta (Mule's foot fern).